Reading from the N-terminus, the 167-residue chain is UPF0303 protein mlr5144 (167 aa).

It belongs to the UPF0303 family.

The polypeptide is UPF0303 protein mlr5144 (Mesorhizobium japonicum (strain LMG 29417 / CECT 9101 / MAFF 303099) (Mesorhizobium loti (strain MAFF 303099))).